Consider the following 270-residue polypeptide: tRNA pseudouridine synthase A (270 aa).

Residue Asp52 is the Nucleophile of the active site. Position 110 (Tyr110) interacts with substrate.

Belongs to the tRNA pseudouridine synthase TruA family. Homodimer.

It catalyses the reaction uridine(38/39/40) in tRNA = pseudouridine(38/39/40) in tRNA. Functionally, formation of pseudouridine at positions 38, 39 and 40 in the anticodon stem and loop of transfer RNAs. The protein is tRNA pseudouridine synthase A of Roseiflexus castenholzii (strain DSM 13941 / HLO8).